A 306-amino-acid chain; its full sequence is Lymphotoxin-beta (306 aa).

The Cytoplasmic segment spans residues 1-27 (MGTRGLQGLGGRPQGRGCLLLAVAGAT). The helical; Signal-anchor for type II membrane protein transmembrane segment at 28 to 48 (SLVTLLLAVPITVLAVLALVP) threads the bilayer. Residues 49–306 (QDQGRRVEKI…KTFFGAVMVG (258 aa)) are Extracellular-facing. Disordered stretches follow at residues 63 to 112 (AQAQ…GPVA) and 127 to 151 (PAAD…DLNP). Residues 74-85 (PSCILPSPSSLS) are compositionally biased toward low complexity. The span at 95-112 (QRSNASRNLASTSQGPVA) shows a compositional bias: polar residues. Residue Asn-98 is glycosylated (N-linked (GlcNAc...) asparagine). Residues 154–305 (PAAHLIGAWM…GKTFFGAVMV (152 aa)) enclose the THD domain. An N-linked (GlcNAc...) asparagine glycan is attached at Asn-284.

It belongs to the tumor necrosis factor family. As to quaternary structure, heterotrimer of either two LTB and one LTA subunits or (less prevalent) two LTA and one LTB subunits.

Its subcellular location is the membrane. Its function is as follows. Cytokine that binds to LTBR/TNFRSF3. May play a specific role in immune response regulation. Provides the membrane anchor for the attachment of the heterotrimeric complex to the cell surface. The chain is Lymphotoxin-beta (Ltb) from Mus musculus (Mouse).